Consider the following 280-residue polypeptide: Diaminopimelate epimerase (280 aa).

Residues N12, Q45, and N65 each contribute to the substrate site. C74 (proton donor) is an active-site residue. Residues 75–76, N163, N196, and 214–215 contribute to the substrate site; these read GN and ER. C223 serves as the catalytic Proton acceptor. 224 to 225 contacts substrate; the sequence is GT.

Belongs to the diaminopimelate epimerase family. In terms of assembly, homodimer.

It localises to the cytoplasm. The enzyme catalyses (2S,6S)-2,6-diaminopimelate = meso-2,6-diaminopimelate. The protein operates within amino-acid biosynthesis; L-lysine biosynthesis via DAP pathway; DL-2,6-diaminopimelate from LL-2,6-diaminopimelate: step 1/1. In terms of biological role, catalyzes the stereoinversion of LL-2,6-diaminopimelate (L,L-DAP) to meso-diaminopimelate (meso-DAP), a precursor of L-lysine and an essential component of the bacterial peptidoglycan. This is Diaminopimelate epimerase from Shewanella sediminis (strain HAW-EB3).